Here is a 273-residue protein sequence, read N- to C-terminus: Proteasome subunit beta type-10 (273 aa).

An N-acetylmethionine modification is found at Met-1. Positions 1-39 are cleaved as a propeptide — removed in mature form; it reads MLKQAVEPTGGFSFENCQRNASLEHVLPGLRVPHARKTG. The Nucleophile role is filled by Thr-40.

Belongs to the peptidase T1B family. In terms of assembly, the 26S proteasome consists of a 20S proteasome core and two 19S regulatory subunits. The 20S proteasome core is composed of 28 subunits that are arranged in four stacked rings, resulting in a barrel-shaped structure. The two end rings are each formed by seven alpha subunits, and the two central rings are each formed by seven beta subunits. The catalytic chamber with the active sites is on the inside of the barrel. Component of the immunoproteasome, where it displaces the equivalent housekeeping subunit PSMB7. Component of the spermatoproteasome, a form of the proteasome specifically found in testis. Autocleaved. The resulting N-terminal Thr residue of the mature subunit is responsible for the nucleophile proteolytic activity. Detected in liver (at protein level).

It localises to the cytoplasm. The protein resides in the nucleus. It carries out the reaction Cleavage of peptide bonds with very broad specificity.. Functionally, the proteasome is a multicatalytic proteinase complex which is characterized by its ability to cleave peptides with Arg, Phe, Tyr, Leu, and Glu adjacent to the leaving group at neutral or slightly basic pH. The proteasome has an ATP-dependent proteolytic activity. This subunit is involved in antigen processing to generate class I binding peptides. Plays a role in determining the T-cell repertoire for an antiviral T-cell response. This chain is Proteasome subunit beta type-10 (Psmb10), found in Mus musculus (Mouse).